The sequence spans 480 residues: Protein nucleotidyltransferase YdiU (480 aa).

Positions 86, 88, 89, 109, 121, 122, 172, and 179 each coordinate ATP. D248 acts as the Proton acceptor in catalysis. Mg(2+) contacts are provided by N249 and D258. Residue D258 coordinates ATP.

The protein belongs to the SELO family. Mg(2+) is required as a cofactor. The cofactor is Mn(2+).

It catalyses the reaction L-seryl-[protein] + ATP = 3-O-(5'-adenylyl)-L-seryl-[protein] + diphosphate. The catalysed reaction is L-threonyl-[protein] + ATP = 3-O-(5'-adenylyl)-L-threonyl-[protein] + diphosphate. The enzyme catalyses L-tyrosyl-[protein] + ATP = O-(5'-adenylyl)-L-tyrosyl-[protein] + diphosphate. It carries out the reaction L-histidyl-[protein] + UTP = N(tele)-(5'-uridylyl)-L-histidyl-[protein] + diphosphate. It catalyses the reaction L-seryl-[protein] + UTP = O-(5'-uridylyl)-L-seryl-[protein] + diphosphate. The catalysed reaction is L-tyrosyl-[protein] + UTP = O-(5'-uridylyl)-L-tyrosyl-[protein] + diphosphate. In terms of biological role, nucleotidyltransferase involved in the post-translational modification of proteins. It can catalyze the addition of adenosine monophosphate (AMP) or uridine monophosphate (UMP) to a protein, resulting in modifications known as AMPylation and UMPylation. The sequence is that of Protein nucleotidyltransferase YdiU from Salmonella paratyphi C (strain RKS4594).